The sequence spans 187 residues: EP300-interacting inhibitor of differentiation 1 (187 aa).

A disordered region spans residues 1–118 (MSEMAELSEL…YDYPEEEQLS (118 aa)). Acidic residues-rich tracts occupy residues 52–63 (LEEEGPMEEEEA) and 93–116 (FESE…EEEQ). Residues 54-120 (EEGPMEEEEA…YPEEEQLSGA (67 aa)) form an interaction with NR0B2 region. Positions 178 to 182 (LGCDE) match the LXCXE motif motif.

In terms of assembly, interacts via its LXCXE motif with the entire pocket region of RB1. Interacts with EP300, NR0B2 and TRIM27. Ubiquitinated in U2OS osteosarcoma cells and is rapidly degraded by proteasome as cells exit the cell cycle exit. Widely expressed. Most abundantly expressed in heart, skeletal muscle, pancreas, brain and testis. Expressed at much lower levels in placenta and peripheral blood leukocyte. Barely detectable in lung. Also weakly expressed in lung carcinoma A-549 and various leukemia cell lines.

It is found in the nucleus. It localises to the cytoplasm. Its function is as follows. Interacts with RB1 and EP300 and acts as a repressor of MYOD1 transactivation. Inhibits EP300 and CBP histone acetyltransferase activity. May be involved in coupling cell cycle exit to the transcriptional activation of genes required for cellular differentiation. May act as a candidate coinhibitory factor for NR0B2 that can be directly linked to transcription inhibitory mechanisms. The polypeptide is EP300-interacting inhibitor of differentiation 1 (Homo sapiens (Human)).